The sequence spans 538 residues: MDSRELALASLMCDTGGPGELSVGHQQRRTKKWSFSLVVAALVGAFGSSFLYGYNLSVVNAPTPYIKAFYNGTWYRRHGQPIDPDTLTLLWSVTVSIFAIGGLVGTLMVKMIGKFLGRKSTLLVNNGFAISAALLMACSLRAGTFEMLIVGRFIMGVDGGIALSALPMYLNEISPKEIRGSLGQVTAIFICIGVFSGQLLGLPELLGRESTWPYLFGVIIVPALVQLASLPFLPESPRYLLFEKHDEAGAMKAFQTFLGKADVSQELEEALAESRVQRNLRLVSVLELLRAPFVRWQVITVIITMASYQLCGLNAIWFYTNSIFGKAGIPQDKIPYITLSTGGIETLAAIFSGLVIERLGRRPLLIGGFGLMALFFGTLTATLTLQDQAPWVPYLSIVCILAIIASFCSGPGGIPFILTGEFFQQSERPAAFMIAGTVNWLSNFAVGLLFPFIQKSLDSYCFLVFATICIAGATYFYFVLPETKNRTHAEISQAFAKRNKAQPPEVKADSAMTEEKANSQTEPDSSSTLDSYGQNKIV.

Over 1–34 the chain is Cytoplasmic; the sequence is MDSRELALASLMCDTGGPGELSVGHQQRRTKKWS. Phosphoserine is present on S3. Residues 35–54 form a helical membrane-spanning segment; the sequence is FSLVVAALVGAFGSSFLYGY. 2 N-linked (GlcNAc...) asparagine glycosylation sites follow: N55 and N71. The Extracellular portion of the chain corresponds to 55–88; sequence NLSVVNAPTPYIKAFYNGTWYRRHGQPIDPDTLT. Residues 89-109 traverse the membrane as a helical segment; it reads LLWSVTVSIFAIGGLVGTLMV. Residues 110-120 lie on the Cytoplasmic side of the membrane; it reads KMIGKFLGRKS. The helical transmembrane segment at 121–143 threads the bilayer; sequence TLLVNNGFAISAALLMACSLRAG. The Extracellular portion of the chain corresponds to 144–148; it reads TFEML. Residues 149 to 170 form a helical membrane-spanning segment; that stretch reads IVGRFIMGVDGGIALSALPMYL. The Cytoplasmic portion of the chain corresponds to 171 to 181; that stretch reads NEISPKEIRGS. Residues 182-200 traverse the membrane as a helical segment; it reads LGQVTAIFICIGVFSGQLL. Over 201–211 the chain is Extracellular; the sequence is GLPELLGREST. Residues 212 to 233 traverse the membrane as a helical segment; that stretch reads WPYLFGVIIVPALVQLASLPFL. Residues 234 to 297 lie on the Cytoplasmic side of the membrane; the sequence is PESPRYLLFE…LLRAPFVRWQ (64 aa). The helical transmembrane segment at 298 to 319 threads the bilayer; that stretch reads VITVIITMASYQLCGLNAIWFY. The Extracellular segment spans residues 320 to 333; that stretch reads TNSIFGKAGIPQDK. A helical membrane pass occupies residues 334 to 356; sequence IPYITLSTGGIETLAAIFSGLVI. Residues 357–362 are Cytoplasmic-facing; it reads ERLGRR. Residues 363-385 form a helical membrane-spanning segment; that stretch reads PLLIGGFGLMALFFGTLTATLTL. At 386 to 390 the chain is on the extracellular side; that stretch reads QDQAP. Residues 391–418 traverse the membrane as a helical segment; that stretch reads WVPYLSIVCILAIIASFCSGPGGIPFIL. Over 419–429 the chain is Cytoplasmic; that stretch reads TGEFFQQSERP. Residues 430-453 form a helical membrane-spanning segment; that stretch reads AAFMIAGTVNWLSNFAVGLLFPFI. Residues 454–458 lie on the Extracellular side of the membrane; it reads QKSLD. Residues 459–480 traverse the membrane as a helical segment; sequence SYCFLVFATICIAGATYFYFVL. The Cytoplasmic portion of the chain corresponds to 481–538; that stretch reads PETKNRTHAEISQAFAKRNKAQPPEVKADSAMTEEKANSQTEPDSSSTLDSYGQNKIV. The disordered stretch occupies residues 495–538; sequence FAKRNKAQPPEVKADSAMTEEKANSQTEPDSSSTLDSYGQNKIV. Residues 518 to 538 show a composition bias toward polar residues; it reads NSQTEPDSSSTLDSYGQNKIV.

Belongs to the major facilitator superfamily. Sugar transporter (TC 2.A.1.1) family. Post-translationally, N-glycosylated. In terms of tissue distribution, highly expressed in the intestine, with high expression in the jejunum and ileum, the segments of the intestine that perform the majority of urate excretion. Isoform 1: Widely expressed. Isoform 1: In kidney, expressed at low levels in proximal tubules. Isoform 2: Primarily expressed in liver and kidney; with specific expression in distal convoluted and connecting tubules of kidney.

It localises to the basolateral cell membrane. Its subcellular location is the apical cell membrane. It carries out the reaction urate(out) = urate(in). In terms of biological role, high-capacity urate transporter, which may play a role in the urate reabsorption by proximal tubules. May have a residual high-affinity, low-capacity glucose and fructose transporter activity. Transports urate at rates 45- to 60-fold faster than glucose. Does not transport galactose. May mediate small uptake of adenine but not of other nucleobases. This Mus musculus (Mouse) protein is Solute carrier family 2, facilitated glucose transporter member 9.